We begin with the raw amino-acid sequence, 701 residues long: MAQAGVVGEVTQVLCAAGGALELPELRRRLRMGLSADALERLLRQRGRFVVAVRAGGAAAAPERVVLAASPLRLCRAHQGSKPGCVGLCAQLHLCRFMVYGACKFLRAGKNCRNSHSLTTEHNLSVLRTHGVDHLSYNELCQLLFQNDPWLLPEICQHYNKGDGPHGSCAFQKQCIKLHICQYFLQGECKFGTSCKRSHDFSNSENLEKLEKLGMSSDLVSRLPTIYRNAHDIKNKSSAPSRVPPLFVPQGTSERKDSSGSVSPNTLSQEEGDQICLYHIRKSCSFQDKCHRVHFHLPYRWQFLDRGKWEDLDNMELIEEAYCNPKIERILCSESASTFHSHCLNFNAMTYGATQARRLSTASSVTKPPHFILTTDWIWYWSDEFGSWQEYGRQGTVHPVTTVSSSDVEKAYLAYCTPGSDGQAATLKFQAGKHNYELDFKAFVQKNLVYGTTKKVCRRPKYVSPQDVTTMQTCNTKFPGPKSIPDYWDSSALPDPGFQKITLSSSSEEYQKVWNLFNRTLPFYFVQKIERVQNLALWEVYQWQKGQMQKQNGGKAVDERQLFHGTSAIFVDAICQQNFDWRVCGVHGTSYGKGSYFARDAAYSHHYSKSDTQTHTMFLARVLVGEFVRGNASFVRPPAKEGWSNAFYDSCVNSVSDPSIFVIFEKHQVYPEYVIQYTTSSKPSVTPSILLALGSLFSSRQ.

C3H1-type zinc fingers lie at residues 94–119 (LCRF…HSLT), 150–179 (WLLP…IKLH), and 180–202 (ICQY…HDFS). Residues 234–268 (KNKSSAPSRVPPLFVPQGTSERKDSSGSVSPNTLS) form a disordered region. Position 258 is a phosphoserine (S258). Polar residues predominate over residues 259-268 (SGSVSPNTLS). 2 consecutive C3H1-type zinc fingers follow at residues 270 to 297 (EEGD…HFHL) and 271 to 296 (EGDQ…VHFH). 2 WWE domains span residues 298-361 (PYRW…RLST) and 364-458 (SVTK…KVCR). C474 carries the ADP-ribosylcysteine modification. The PARP catalytic domain maps to 484-698 (IPDYWDSSAL…ILLALGSLFS (215 aa)). 2 positions are modified to ADP-ribosyl aspartic acid: D600 and D611.

Belongs to the ARTD/PARP family. Interacts with PARP11; this interaction plays a key role in zika virus suppression. Interacts with ISG15. Post-translationally, auto-mono-ADP-ribosylated. In terms of processing, phosphorylated by PRKD1.

Its subcellular location is the nucleus. It localises to the golgi apparatus. It is found in the trans-Golgi network. The protein localises to the cytoplasm. The protein resides in the stress granule. The enzyme catalyses L-aspartyl-[protein] + NAD(+) = 4-O-(ADP-D-ribosyl)-L-aspartyl-[protein] + nicotinamide. It carries out the reaction L-cysteinyl-[protein] + NAD(+) = S-(ADP-D-ribosyl)-L-cysteinyl-[protein] + nicotinamide + H(+). Its function is as follows. Mono-ADP-ribosyltransferase that mediates mono-ADP-ribosylation of target proteins. Acts as an antiviral factor by cooperating with PARP11 to suppress Zika virus replication. Displays anti-alphavirus activity during IFN-gamma immune activation by directly ADP-ribosylating the alphaviral non-structural proteins nsP3 and nsP4. Acts as a component of the PRKD1-driven regulatory cascade that selectively controls a major branch of the basolateral transport pathway by catalyzing the MARylation of GOLGA1. Acts also as a key regulator of mitochondrial function, protein translation, and inflammation. Inhibits PINK1/Parkin-dependent mitophagy and promotes cartilage degeneration by inhibiting the ubiquitination and SUMOylation of MFN1/2 by upregulating ISG15 and ISGylation. In Homo sapiens (Human), this protein is Protein mono-ADP-ribosyltransferase PARP12.